A 353-amino-acid polypeptide reads, in one-letter code: Purine nucleoside phosphorylase (353 aa).

Over residues 1 to 16 (MSKFSYLQNGKASTNG) the composition is skewed to polar residues. The disordered stretch occupies residues 1–42 (MSKFSYLQNGKASTNGVPHANGHHQQHQNGHSNGVARNGGTA). Phosphate contacts are provided by residues Ser-98, His-129, 149–151 (RFH), and Ala-181. Residue Glu-266 participates in a purine D-ribonucleoside binding. Residue Ser-285 coordinates phosphate. Residue Asn-308 participates in a purine D-ribonucleoside binding.

It belongs to the PNP/MTAP phosphorylase family. In terms of assembly, homotrimer.

The catalysed reaction is inosine + phosphate = alpha-D-ribose 1-phosphate + hypoxanthine. It carries out the reaction guanosine + phosphate = alpha-D-ribose 1-phosphate + guanine. The enzyme catalyses 2'-deoxyguanosine + phosphate = 2-deoxy-alpha-D-ribose 1-phosphate + guanine. It catalyses the reaction 2'-deoxyinosine + phosphate = 2-deoxy-alpha-D-ribose 1-phosphate + hypoxanthine. It participates in purine metabolism; purine nucleoside salvage. With respect to regulation, inhibited by 5'-deaza-1'-aza-2c-deoxy-1'-(9-methylene) immucillin-H (DADMe-ImmH). As part of the purine salvage pathway, catalyzes the phosphorolytic breakdown of the N-glycosidic bond in the beta-(deoxy)ribonucleoside molecules, with the formation of the corresponding free purine bases and pentose-1-phosphate. Preferentially acts on 2'-deoxyinosine and inosine, and to a lesser extent on 2'-deoxyguanosine and guanosine. Has no activity towards adenosine or 2'-deoxyadenosine. The polypeptide is Purine nucleoside phosphorylase (Anopheles gambiae (African malaria mosquito)).